We begin with the raw amino-acid sequence, 314 residues long: Fumarylacetoacetate hydrolase domain-containing protein 2 (314 aa).

A divalent metal cation is bound by residues E159, E161, and D190. K203 carries the post-translational modification N6-acetyllysine; alternate. K203 carries the N6-succinyllysine; alternate modification. N6-acetyllysine is present on K234.

Belongs to the FAH family. It depends on Ca(2+) as a cofactor. The cofactor is Mg(2+).

May have hydrolase activity. This is Fumarylacetoacetate hydrolase domain-containing protein 2 (FAHD2) from Pongo abelii (Sumatran orangutan).